A 106-amino-acid polypeptide reads, in one-letter code: Small ribosomal subunit protein bS20 (106 aa).

Positions 1-32 (MAQKKPKRNLSALKRHRQSLKRRLRNKAKKSA) are disordered.

In terms of assembly, part of the 30S ribosomal subunit.

One of the primary rRNA binding proteins, it binds directly to 16S rRNA where it nucleates assembly of the bottom of the body of the 30S subunit, by binding to several RNA helices of the 16S rRNA. The chain is Small ribosomal subunit protein bS20 (rpsT) from Thermus thermophilus (strain ATCC 27634 / DSM 579 / HB8).